Consider the following 407-residue polypeptide: Imidazolonepropionase (407 aa).

Fe(3+) contacts are provided by His-73 and His-75. 2 residues coordinate Zn(2+): His-73 and His-75. 4-imidazolone-5-propanoate is bound by residues Arg-82, Tyr-145, and His-178. Tyr-145 serves as a coordination point for N-formimidoyl-L-glutamate. A Fe(3+)-binding site is contributed by His-243. Position 243 (His-243) interacts with Zn(2+). Position 246 (Gln-246) interacts with 4-imidazolone-5-propanoate. Asp-318 contributes to the Fe(3+) binding site. Residue Asp-318 participates in Zn(2+) binding. N-formimidoyl-L-glutamate contacts are provided by Asn-320 and Gly-322. Thr-323 is a 4-imidazolone-5-propanoate binding site.

It belongs to the metallo-dependent hydrolases superfamily. HutI family. Zn(2+) serves as cofactor. Fe(3+) is required as a cofactor.

Its subcellular location is the cytoplasm. It catalyses the reaction 4-imidazolone-5-propanoate + H2O = N-formimidoyl-L-glutamate. It participates in amino-acid degradation; L-histidine degradation into L-glutamate; N-formimidoyl-L-glutamate from L-histidine: step 3/3. Functionally, catalyzes the hydrolytic cleavage of the carbon-nitrogen bond in imidazolone-5-propanoate to yield N-formimidoyl-L-glutamate. It is the third step in the universal histidine degradation pathway. This chain is Imidazolonepropionase, found in Serratia proteamaculans (strain 568).